The sequence spans 203 residues: Large ribosomal subunit protein eL15 (203 aa).

A disordered region spans residues glutamate 160 to glycine 186. Residues lysine 169–glycine 186 are compositionally biased toward basic residues.

Belongs to the eukaryotic ribosomal protein eL15 family. In terms of assembly, component of the large ribosomal subunit (LSU). Mature N.crassa ribosomes consist of a small (40S) and a large (60S) subunit. The 40S small subunit contains 1 molecule of ribosomal RNA (18S rRNA) and at least 32 different proteins. The large 60S subunit contains 3 rRNA molecules (26S, 5.8S and 5S rRNA) and at least 42 different proteins.

Its subcellular location is the cytoplasm. Component of the ribosome, a large ribonucleoprotein complex responsible for the synthesis of proteins in the cell. The small ribosomal subunit (SSU) binds messenger RNAs (mRNAs) and translates the encoded message by selecting cognate aminoacyl-transfer RNA (tRNA) molecules. The large subunit (LSU) contains the ribosomal catalytic site termed the peptidyl transferase center (PTC), which catalyzes the formation of peptide bonds, thereby polymerizing the amino acids delivered by tRNAs into a polypeptide chain. The nascent polypeptides leave the ribosome through a tunnel in the LSU and interact with protein factors that function in enzymatic processing, targeting, and the membrane insertion of nascent chains at the exit of the ribosomal tunnel. The protein is Large ribosomal subunit protein eL15 (rpl-15) of Neurospora crassa (strain ATCC 24698 / 74-OR23-1A / CBS 708.71 / DSM 1257 / FGSC 987).